A 404-amino-acid polypeptide reads, in one-letter code: Nesprin-4 (404 aa).

Disordered stretches follow at residues 1–91 (MALS…GGKH) and 277–347 (GQRG…GAPD). Topologically, residues 1 to 355 (MALSLPLGPR…PDPASRQPLT (355 aa)) are cytoplasmic. Positions 39–52 (EESTSPEQAQTLGQ) are enriched in polar residues. Residues 307–320 (HQKRLARHQRHSLL) are compositionally biased toward basic residues. One can recognise a KASH domain in the interval 347-404 (DPASRQPLTFLLILFLLFLLLVGAMFLLPASGGPCCSHARIPRTPYLVLSYVNGLPPV). Residues 356-376 (FLLILFLLFLLLVGAMFLLPA) form a helical; Anchor for type IV membrane protein membrane-spanning segment. The Perinuclear space portion of the chain corresponds to 377-404 (SGGPCCSHARIPRTPYLVLSYVNGLPPV).

Belongs to the nesprin family. In terms of assembly, core component of LINC complexes which are composed of inner nuclear membrane SUN domain-containing proteins coupled to outer nuclear membrane KASH domain-containing nesprins. SUN and KASH domain-containing proteins seem to bind each other promiscuously; however, differentially expression of LINC complex constituents can give rise to specific assemblies. Probably part of a SUN1-containing LINC complex. Interacts with kinesins KIF5B and KLC1. The disulfid bond with SUN1 or SUN2 is required for stability of the respective LINC complex under tensile forces.

It localises to the nucleus outer membrane. Functionally, as a component of the LINC (LInker of Nucleoskeleton and Cytoskeleton) complex, involved in the connection between the nuclear lamina and the cytoskeleton. The nucleocytoplasmic interactions established by the LINC complex play an important role in the transmission of mechanical forces across the nuclear envelope and in nuclear movement and positioning. Behaves as a kinesin cargo, providing a functional binding site for kinesin-1 at the nuclear envelope. Hence may contribute to the establishment of secretory epithelial morphology by promoting kinesin-dependent apical migration of the centrosome and Golgi apparatus and basal localization of the nucleus. In Homo sapiens (Human), this protein is Nesprin-4 (SYNE4).